The following is a 1168-amino-acid chain: ATP-dependent DNA helicase mph1 (1168 aa).

2 stretches are compositionally biased toward polar residues: residues 24–38 and 59–68; these read NITS…QLAS and PTVSQGQATA. Residues 24-132 form a disordered region; it reads NITSHHPSNS…PFRADMPPEQ (109 aa). Residues 71 to 88 show a composition bias toward low complexity; that stretch reads RAKTASKPTTSATTSRPS. Residues 89-104 show a composition bias toward polar residues; it reads LAQSSQRKNLRQTTLW. In terms of domain architecture, Helicase ATP-binding spans 162–330; the sequence is IVKNGLFNNT…DVIDNLGISH (169 aa). ATP is bound at residue 175 to 182; the sequence is LPTGLGKT. The DEAH box motif lies at 278–281; that stretch reads DEAH. Positions 506 to 665 constitute a Helicase C-terminal domain; that stretch reads LVNHFMDAGE…GSRFTFRHDL (160 aa). Disordered stretches follow at residues 690 to 717 and 830 to 1168; these read SQNP…FNMP and APAN…DDQE. Over residues 701–714 the composition is skewed to basic residues; the sequence is SAARMRTKPAKKKF. Residues 895–907 show a composition bias toward polar residues; that stretch reads TAKTKSTGVSKQT. A compositionally biased stretch (acidic residues) spans 920-936; the sequence is DCEEGGNEYDGNVDDDE. Basic residues predominate over residues 941 to 959; it reads RNFRSKGRGRGSGRGKKSQ. The segment covering 985-996 has biased composition (acidic residues); the sequence is GSDDGADLEDFI. Positions 1001–1030 are enriched in polar residues; that stretch reads EVTSSLQHRPRGSTSPTTAPDAGSSSLSSK.

Belongs to the DEAD box helicase family. DEAH subfamily. FANCM sub-subfamily. Interacts with the MHF histone-fold complex to form the FANCM-MHF complex.

It localises to the nucleus. The catalysed reaction is ATP + H2O = ADP + phosphate + H(+). Its function is as follows. ATP-dependent DNA helicase involved in DNA damage repair by homologous recombination and in genome maintenance. Capable of unwinding D-loops. Plays a role in limiting crossover recombinants during mitotic DNA double-strand break (DSB) repair. Component of a FANCM-MHF complex which promotes gene conversion at blocked replication forks, probably by reversal of the stalled fork. This chain is ATP-dependent DNA helicase mph1, found in Neurospora crassa (strain ATCC 24698 / 74-OR23-1A / CBS 708.71 / DSM 1257 / FGSC 987).